The chain runs to 768 residues: MEINEEAMAAHKRAFLDFLDQDVGKGVYMQAVRDMVQNKRHRLIIGMDDLRNHNLDLARRVIRTPGEYMQPASDAVSEVARNLDPKFLKEGERVMVGFSGPFGFHRVTPRDLMSSFIGTMVCVEGIVTKCSLVRPKVVKSVHFCPVTGDFLSREYRDITSFVGLPTGSVYPTRDDNGNLLVTEYGMCEYKDHQTLSMQEVPENSAPGQLPRTVDVIVEDDLVDCCKPGDRVSIVGVYKALPGKSKGSVSGVFRTVLIANNVSLLNKEANAPVYTREDLKRMKEISRRNDTFDLLGNSLAPSIYGHLWIKKAVVLLMLGGVEKNLKNGTHLRGDINMMMVGDPSVAKSQLLRAVMNIAPLAISTTGRGSSGVGLTAAVTSDQETGERRLEAGAMVLADRGVVCIDEFDKMNDQDRVAIHEVMEQQTVTIAKAGIHASLNARCSVIAAANPIYGTYDRSLTPTKNIGLPDSLLSRFDLLFIVLDQMDPEIDRQISEHVARMHRYCTDDGGARSLDKEGYAEEDDGDANAAIFVKYDRMLHGQDRRRGKKSKQDRLTVKFLKKYIHYAKNLIQPRLTDEASDHIATSYAELRDGSANAKSGGGTLPITARTLESIIRLSTAHAKMKLRHEVLKSDVEAALQVLNFAIYHKELTEMEEREQKEMEMKQQAEHDAGATGGTVDGHGSSGNDPMDVDVGSNDQNVSAERIEAFEALLGQHVLANHIDQMSIDEIEQMVNRESTAPYTRSQVEFILERMQDANRVMIRDGVVRII.

The MCM domain occupies 290–497 (TFDLLGNSLA…IDRQISEHVA (208 aa)). 340 to 347 (GDPSVAKS) is an ATP binding site. An Arginine finger motif is present at residues 472–475 (SRFD). The disordered stretch occupies residues 662–687 (MKQQAEHDAGATGGTVDGHGSSGNDP). The span at 672–682 (ATGGTVDGHGS) shows a compositional bias: gly residues.

Belongs to the MCM family.

It localises to the nucleus. The enzyme catalyses ATP + H2O = ADP + phosphate + H(+). Acts as a factor that allows the DNA to undergo a single round of replication per cell cycle. Required for DNA replication and cell proliferation. May act as a component of the MCM complex which is the putative replicative helicase of the replication licensing system in eukaryotic cells. The protein is DNA replication licensing factor MCM3 homolog 1 (ROA1) of Zea mays (Maize).